The primary structure comprises 451 residues: MREVISIHIGQAGIQVGNACWELYCLEHGIQPDGQMPSDKTIGGGDDAFNTFFSETGAGKHVPRCIFLDLEPTVVDEVRTGTYRQLFHPEQLISGKEDAANNFARGHYTIGKEIVDLALDRIRKLADNCTGLQGFLVFNAVGGGTGSGLGSLLLERLSVDYGKKSKLGFTVYPSPQVSTAVVEPYNSVLSTHSLLEHTDVAVMLDNEAIYDICRRSLDIERPTYTNLNRLIAQVISSLTASLRFDGALNVDVTEFQTNLVPYPRIHFMLSSYAPIISAEKAYHEQLSVAEITNAAFEPASMMVKCDPRHGKYMACCLMYRGDVVPKDVNAAVATIKTKRTIQFVDWCPTGFKCGINYQPPTVVPGGDLAKVQRAVCMISNSTAIGEIFSRLDHKFDLMYAKRAFVHWYVGEGMEEGEFSEAREDLAALEKDFEEVGAESAEGAGEGEGEEY.

A GTP-binding site is contributed by Gln11. Lys40 bears the N6-acetyllysine mark. GTP is bound by residues Glu71, Gly144, Thr145, Thr179, Asn206, and Asn228. Glu71 contributes to the Mg(2+) binding site. The active site involves Glu254.

This sequence belongs to the tubulin family. In terms of assembly, dimer of alpha and beta chains. A typical microtubule is a hollow water-filled tube with an outer diameter of 25 nm and an inner diameter of 15 nM. Alpha-beta heterodimers associate head-to-tail to form protofilaments running lengthwise along the microtubule wall with the beta-tubulin subunit facing the microtubule plus end conferring a structural polarity. Microtubules usually have 13 protofilaments but different protofilament numbers can be found in some organisms and specialized cells. Mg(2+) is required as a cofactor. Post-translationally, undergoes a tyrosination/detyrosination cycle, the cyclic removal and re-addition of a C-terminal tyrosine residue by the enzymes tubulin tyrosine carboxypeptidase (TTCP) and tubulin tyrosine ligase (TTL), respectively. In terms of processing, acetylation of alpha chains at Lys-40 stabilizes microtubules and affects affinity and processivity of microtubule motors. This modification has a role in multiple cellular functions, ranging from cell motility, cell cycle progression or cell differentiation to intracellular trafficking and signaling.

It localises to the cytoplasm. The protein resides in the cytoskeleton. The enzyme catalyses GTP + H2O = GDP + phosphate + H(+). Tubulin is the major constituent of microtubules, a cylinder consisting of laterally associated linear protofilaments composed of alpha- and beta-tubulin heterodimers. Microtubules grow by the addition of GTP-tubulin dimers to the microtubule end, where a stabilizing cap forms. Below the cap, tubulin dimers are in GDP-bound state, owing to GTPase activity of alpha-tubulin. This Volvox carteri (Green alga) protein is Tubulin alpha-1/alpha-2 chain (TUBA1).